The primary structure comprises 255 residues: Homeobox-leucine zipper protein ATHB-23 (255 aa).

The homeobox DNA-binding region spans 68–127 (MGEKKRRLNMEQLKALEKDFELGNKLESDRKLELARALGLQPRQIAIWFQNRRARSKTKQ). Residues 128–163 (LEKDYDMLKRQFESLRDENEVLQTQNQKLQAQVMAL) form a leucine-zipper region.

The protein belongs to the HD-ZIP homeobox family. Class I subfamily. As to expression, expressed in young leaves, in the adaxial domain of leaf primordia and the rib meristem. Expressed in the styles of flowers and siliques.

It localises to the nucleus. Probable transcription factor. In Arabidopsis thaliana (Mouse-ear cress), this protein is Homeobox-leucine zipper protein ATHB-23 (ATHB-23).